The following is a 541-amino-acid chain: Berberine bridge enzyme-like 24 (541 aa).

The signal sequence occupies residues 1-32 (MGNSKPLPTISCIIVSVLYFSFYCITPTSSSA). An intrachain disulfide couples cysteine 41 to cysteine 105. The N-linked (GlcNAc...) asparagine glycan is linked to asparagine 62. The 177-residue stretch at 83 to 259 (SMPKPGFIFR…LAWKIKLVPV (177 aa)) folds into the FAD-binding PCMH-type domain. Positions 120–184 (HDFEALSYVS…KIHGFPAGLC (65 aa)) form a cross-link, 6-(S-cysteinyl)-8alpha-(pros-histidyl)-FAD (His-Cys). Asparagine 309, asparagine 408, and asparagine 435 each carry an N-linked (GlcNAc...) asparagine glycan.

It belongs to the oxygen-dependent FAD-linked oxidoreductase family. FAD is required as a cofactor. In terms of processing, the FAD cofactor is bound via a bicovalent 6-S-cysteinyl, 8alpha-N1-histidyl FAD linkage.

It localises to the secreted. Its subcellular location is the cell wall. This Arabidopsis thaliana (Mouse-ear cress) protein is Berberine bridge enzyme-like 24.